A 96-amino-acid polypeptide reads, in one-letter code: uncharacterized protein (96 aa).

This is an uncharacterized protein from Escherichia coli (strain K12).